Consider the following 566-residue polypeptide: Membrane protein insertase YidC (566 aa).

A helical membrane pass occupies residues 7-27 (ILIVALAIVSYVMVLKWNQDY). The disordered stretch occupies residues 38-72 (ASSTTAPGLPDAPTGTSAANDDIPRAASDTTAPAE). The next 5 helical transmembrane spans lie at 347–367 (LELTVDYGFLWFIAQPIFWLL), 373–393 (LVGNWGWSIIFLTMLIKGIFF), 443–463 (LGGCLPILVQMPVFLSLYWVL), 474–494 (FMLWITDLSIKDPFFILPIIM), and 521–541 (PIIFTFFFLWFPAGLVLYWVV).

The protein belongs to the OXA1/ALB3/YidC family. Type 1 subfamily. In terms of assembly, interacts with the Sec translocase complex via SecD. Specifically interacts with transmembrane segments of nascent integral membrane proteins during membrane integration.

It localises to the cell inner membrane. Its function is as follows. Required for the insertion and/or proper folding and/or complex formation of integral membrane proteins into the membrane. Involved in integration of membrane proteins that insert both dependently and independently of the Sec translocase complex, as well as at least some lipoproteins. Aids folding of multispanning membrane proteins. The sequence is that of Membrane protein insertase YidC from Pseudomonas fluorescens (strain ATCC BAA-477 / NRRL B-23932 / Pf-5).